Consider the following 293-residue polypeptide: NAD-dependent protein deacetylase (293 aa).

In terms of domain architecture, Deacetylase sirtuin-type spans 1–284 (MTVAITQTGP…QPPDPLHTAT (284 aa)). NAD(+) contacts are provided by residues 27-47 (GAGC…GGWK) and 105-108 (QNVD). Histidine 123 (proton acceptor) is an active-site residue. Residues cysteine 131, cysteine 134, cysteine 182, and cysteine 185 each coordinate Zn(2+). NAD(+) contacts are provided by residues 222-224 (GSS), 248-250 (NFG), and cysteine 266.

Belongs to the sirtuin family. Class II subfamily. Zn(2+) is required as a cofactor.

It localises to the cytoplasm. It catalyses the reaction N(6)-acetyl-L-lysyl-[protein] + NAD(+) + H2O = 2''-O-acetyl-ADP-D-ribose + nicotinamide + L-lysyl-[protein]. Functionally, NAD-dependent protein deacetylase which modulates the activities of several enzymes which are inactive in their acetylated form. This Xanthomonas campestris pv. campestris (strain 8004) protein is NAD-dependent protein deacetylase.